A 540-amino-acid polypeptide reads, in one-letter code: Cytokinin dehydrogenase 5 (540 aa).

Positions methionine 1 to alanine 22 are cleaved as a signal peptide. One can recognise an FAD-binding PCMH-type domain in the interval serine 63–alanine 241. 3 residues coordinate FAD: alanine 97, glycine 99, and glycine 101. Histidine 102 is subject to Pros-8alpha-FAD histidine. 7 residues coordinate FAD: serine 103, glutamine 107, aspartate 165, threonine 170, serine 176, isoleucine 180, and isoleucine 231. Asparagine 310 and asparagine 406 each carry an N-linked (GlcNAc...) asparagine glycan. Residues tyrosine 479 and glutamine 517 each contribute to the FAD site.

The protein belongs to the oxygen-dependent FAD-linked oxidoreductase family. FAD serves as cofactor. As to expression, expressed in the developing leaf petioles and in the rib zone of the axillary shoot meristems. In roots, expressed in the vascular cylinder within the root apical meristem and only faintly detectable in the differentiated root.

The protein resides in the secreted. Its subcellular location is the extracellular space. The catalysed reaction is N(6)-dimethylallyladenine + A + H2O = 3-methyl-2-butenal + adenine + AH2. Catalyzes the oxidation of cytokinins, a family of N(6)-substituted adenine derivatives that are plant hormones, where the substituent is an isopentenyl group. In association with CKX3 regulates the activity of the reproductive meristems, flower organ size and ovule formation. The polypeptide is Cytokinin dehydrogenase 5 (CKX5) (Arabidopsis thaliana (Mouse-ear cress)).